A 398-amino-acid chain; its full sequence is MFLKNIFIALAIALLVDATPTTTKRSAGFVALDFSVVKTPKAFPVTNGQEGKTSKRQAVPVTLHNEQVTYAADITVGSNNQKLNVIVDTGSSDLWVPDVNVDCQVTYSDQTADFCKQKGTYDPSGSSASQDLNTPFKIGYGDGSSSQGTLYKDTVGFGGVSIKNQVLADVDSTSIDQGILGVGYKTNEAGGSYDNVPVTLKKQGVIAKNAYSLYLNSPDAATGQIIFGGVDNAKYSGSLIALPVTSDRELRISLGSVEVSGKTINTDNVDVLVDSGTTITYLQQDLADQIIKAFNGKLTQDSNGNSFYEVDCNLSGDVVFNFSKNAKISVPASEFAASLQGDDGQPYDKCQLLFDVNDANILGDNFLRSAYIVYDLDDNEISLAQVKYTSASSISALT.

Positions 1 to 18 are cleaved as a signal peptide; that stretch reads MFLKNIFIALAIALLVDA. The propeptide at 19–56 is activation peptide; it reads TPTTTKRSAGFVALDFSVVKTPKAFPVTNGQEGKTSKR. The Peptidase A1 domain occupies 70–384; sequence YAADITVGSN…DLDDNEISLA (315 aa). Asp-88 is a catalytic residue. Position 88–90 (88–90) interacts with pepstatin A; the sequence is DTG. The cysteines at positions 103 and 115 are disulfide-linked. 141 to 142 contributes to the pepstatin A binding site; the sequence is GD. Residues Asp-247 and Asp-270 each coordinate Zn(2+). Asp-274 is a catalytic residue. 274-278 contacts pepstatin A; the sequence is DSGTT. Cysteines 312 and 350 form a disulfide. Asn-313 and Asn-321 each carry an N-linked (GlcNAc...) asparagine glycan.

The protein belongs to the peptidase A1 family. Monomer.

The protein localises to the secreted. The catalysed reaction is Preferential cleavage at the carboxyl of hydrophobic amino acids, but fails to cleave 15-Leu-|-Tyr-16, 16-Tyr-|-Leu-17 and 24-Phe-|-Phe-25 of insulin B chain. Activates trypsinogen, and degrades keratin.. In terms of biological role, secreted aspartic peptidases (SAPs) are a group of ten acidic hydrolases considered as key virulence factors. These enzymes supply the fungus with nutrient amino acids as well as are able to degrade the selected host's proteins involved in the immune defense. Induces host inflammatory cytokine production in a proteolytic activity-independent way. Plays a role in tissue damage during superficial infection. Moreover, acts toward human hemoglobin though limited proteolysis to generate a variety of antimicrobial hemocidins, enabling to compete with the other microorganisms of the same physiological niche using the microbicidal peptides generated from the host protein. Plays a key role in defense against host by cleaving histatin-5 (Hst 5), a peptide from human saliva that carries out fungicidal activity. The cleavage rate decreases in an order of SAP2 &gt; SAP9 &gt; SAP3 &gt; SAP7 &gt; SAP4 &gt; SAP1 &gt; SAP8. The first cleavage occurs between residues 'Lys-17' and 'His-18' of Hst 5, giving DSHAKRHHGYKRKFHEK and HHSHRGY peptides. Simultaneously, the DSHAKRHHGYKRK peptide is also formed. Further fragmentation by SAP2 results in FHEK and DSHAKRHHGY products. This is Secreted aspartic protease 2 from Candida albicans (strain SC5314 / ATCC MYA-2876) (Yeast).